Reading from the N-terminus, the 257-residue chain is DNA repair protein RecO (257 aa).

Belongs to the RecO family.

Its function is as follows. Involved in DNA repair and RecF pathway recombination. The polypeptide is DNA repair protein RecO (Streptococcus thermophilus (strain ATCC BAA-491 / LMD-9)).